Reading from the N-terminus, the 464-residue chain is Forkhead box protein N3 (464 aa).

2 disordered regions span residues 1–53 and 85–108; these read MGPI…EKGG and PVQD…DAKQ. Positions 14 to 30 are enriched in polar residues; sequence TGISVSSQCYRSSTLSN. Positions 113 to 209 form a DNA-binding region, fork-head; the sequence is KPPYSFSCLI…QALKKTPYHP (97 aa). 2 disordered regions span residues 294–337 and 381–428; these read MESE…SSSA and LVES…MKEA. Residues 316–336 are compositionally biased toward low complexity; sequence SSAKSANKRSSSPSDSISSSS. Residues 389 to 401 are compositionally biased toward basic residues; sequence QHKKKQHLLKLRR.

The protein resides in the nucleus. Its function is as follows. Acts as a transcriptional repressor. May be involved in DNA damage-inducible cell cycle arrests (checkpoints). The sequence is that of Forkhead box protein N3 from Xenopus tropicalis (Western clawed frog).